Consider the following 166-residue polypeptide: Protein-export protein SecB (166 aa).

This sequence belongs to the SecB family. Homotetramer, a dimer of dimers. One homotetramer interacts with 1 SecA dimer.

The protein resides in the cytoplasm. Functionally, one of the proteins required for the normal export of preproteins out of the cell cytoplasm. It is a molecular chaperone that binds to a subset of precursor proteins, maintaining them in a translocation-competent state. It also specifically binds to its receptor SecA. In Actinobacillus pleuropneumoniae serotype 7 (strain AP76), this protein is Protein-export protein SecB.